The chain runs to 206 residues: Large ribosomal subunit protein uL4 (206 aa).

The segment at G46–T77 is disordered.

It belongs to the universal ribosomal protein uL4 family. Part of the 50S ribosomal subunit.

Its function is as follows. One of the primary rRNA binding proteins, this protein initially binds near the 5'-end of the 23S rRNA. It is important during the early stages of 50S assembly. It makes multiple contacts with different domains of the 23S rRNA in the assembled 50S subunit and ribosome. In terms of biological role, forms part of the polypeptide exit tunnel. The polypeptide is Large ribosomal subunit protein uL4 (Acidovorax ebreus (strain TPSY) (Diaphorobacter sp. (strain TPSY))).